We begin with the raw amino-acid sequence, 924 residues long: DNA polymerase (924 aa).

Positions 235 to 386 (YPMSQQPKIV…DDCDVTFRLS (152 aa)) constitute a 3'-5' exonuclease domain.

This sequence belongs to the DNA polymerase type-A family.

The catalysed reaction is DNA(n) + a 2'-deoxyribonucleoside 5'-triphosphate = DNA(n+1) + diphosphate. Its function is as follows. Replicates viral genomic DNA. This polymerase possesses two enzymatic activities: DNA synthesis (polymerase) and an exonucleolytic activity that degrades single-stranded DNA in the 3'-5' direction. This Bacillus phage SP01 (Bacteriophage SP01) protein is DNA polymerase (31).